The sequence spans 101 residues: Large ribosomal subunit protein uL24 (101 aa).

Belongs to the universal ribosomal protein uL24 family. As to quaternary structure, part of the 50S ribosomal subunit.

One of two assembly initiator proteins, it binds directly to the 5'-end of the 23S rRNA, where it nucleates assembly of the 50S subunit. In terms of biological role, one of the proteins that surrounds the polypeptide exit tunnel on the outside of the subunit. In Streptococcus gordonii (strain Challis / ATCC 35105 / BCRC 15272 / CH1 / DL1 / V288), this protein is Large ribosomal subunit protein uL24.